A 182-amino-acid chain; its full sequence is MSLNLNDKKAVVAEISAKVASAQTIVVAEYRGIQVGHLTQLRAKARDQGVYLRVLKNTLARRAVEGTAFASLASEMTGPLIYSISDDAVAAAKVISDFSKTNDKLVVKAGNYAGKPLDKAAVTALANIPSREVLLAQVLGMMLVPVASFTRGLAALAAKKAEGAEPVAAAAPAAESTEAAAE.

The protein belongs to the universal ribosomal protein uL10 family. Part of the ribosomal stalk of the 50S ribosomal subunit. The N-terminus interacts with L11 and the large rRNA to form the base of the stalk. The C-terminus forms an elongated spine to which L12 dimers bind in a sequential fashion forming a multimeric L10(L12)X complex.

Functionally, forms part of the ribosomal stalk, playing a central role in the interaction of the ribosome with GTP-bound translation factors. The sequence is that of Large ribosomal subunit protein uL10 from Janthinobacterium sp. (strain Marseille) (Minibacterium massiliensis).